Here is a 358-residue protein sequence, read N- to C-terminus: Uroporphyrinogen decarboxylase (358 aa).

Substrate-binding positions include 29–33 (RQAGR), Phe-48, Asp-79, Tyr-155, Ser-210, and His-330.

Belongs to the uroporphyrinogen decarboxylase family. In terms of assembly, homodimer.

Its subcellular location is the cytoplasm. It carries out the reaction uroporphyrinogen III + 4 H(+) = coproporphyrinogen III + 4 CO2. The protein operates within porphyrin-containing compound metabolism; protoporphyrin-IX biosynthesis; coproporphyrinogen-III from 5-aminolevulinate: step 4/4. In terms of biological role, catalyzes the decarboxylation of four acetate groups of uroporphyrinogen-III to yield coproporphyrinogen-III. This chain is Uroporphyrinogen decarboxylase, found in Bordetella bronchiseptica (strain ATCC BAA-588 / NCTC 13252 / RB50) (Alcaligenes bronchisepticus).